The chain runs to 282 residues: 4-hydroxybenzoate octaprenyltransferase (282 aa).

9 helical membrane passes run 17–37 (IGIL…NQGF), 40–60 (IDLL…GCVI), 90–110 (AFIL…KLPI), 113–133 (FYFA…KRFF), 135–155 (APQL…FIAS), 163–183 (FIVL…MYAM), 207–227 (LIIA…AINK), 231–251 (CFFY…LKLI), and 262–282 (AFLV…LALI).

The protein belongs to the UbiA prenyltransferase family. Requires Mg(2+) as cofactor.

It localises to the cell inner membrane. The catalysed reaction is all-trans-octaprenyl diphosphate + 4-hydroxybenzoate = 4-hydroxy-3-(all-trans-octaprenyl)benzoate + diphosphate. It participates in cofactor biosynthesis; ubiquinone biosynthesis. Functionally, catalyzes the prenylation of para-hydroxybenzoate (PHB) with an all-trans polyprenyl group. Mediates the second step in the final reaction sequence of ubiquinone-8 (UQ-8) biosynthesis, which is the condensation of the polyisoprenoid side chain with PHB, generating the first membrane-bound Q intermediate 3-octaprenyl-4-hydroxybenzoate. In Legionella pneumophila (strain Lens), this protein is 4-hydroxybenzoate octaprenyltransferase.